A 253-amino-acid chain; its full sequence is Triosephosphate isomerase (253 aa).

Substrate is bound at residue 9–11 (NWK). His-98 (electrophile) is an active-site residue. Glu-170 serves as the catalytic Proton acceptor. Residues Gly-176, Ser-216, and 237–238 (GG) contribute to the substrate site.

Belongs to the triosephosphate isomerase family. In terms of assembly, homodimer.

It localises to the cytoplasm. It catalyses the reaction D-glyceraldehyde 3-phosphate = dihydroxyacetone phosphate. The protein operates within carbohydrate biosynthesis; gluconeogenesis. It participates in carbohydrate degradation; glycolysis; D-glyceraldehyde 3-phosphate from glycerone phosphate: step 1/1. In terms of biological role, involved in the gluconeogenesis. Catalyzes stereospecifically the conversion of dihydroxyacetone phosphate (DHAP) to D-glyceraldehyde-3-phosphate (G3P). The polypeptide is Triosephosphate isomerase (Amoebophilus asiaticus (strain 5a2)).